Reading from the N-terminus, the 318-residue chain is Petal death protein (318 aa).

Positions 1 to 3 are cleaved as a propeptide — removed in mature form; sequence MAP. Positions 1 to 24 are disordered; that stretch reads MAPPNGTTNGETEVATQGSYTAVS. The Mg(2+) site is built by aspartate 107, aspartate 109, and lysine 142.

This sequence belongs to the isocitrate lyase/PEP mutase superfamily. Homodimer and homotetramer formed by a dimer of homodimer. It depends on Mg(2+) as a cofactor. Requires Mn(2+) as cofactor. Fe(2+) serves as cofactor. Co(2+) is required as a cofactor. In terms of tissue distribution, accumulates in senescing flower petals.

It carries out the reaction oxaloacetate + H2O = oxalate + acetate + H(+). Its function is as follows. Catalyzes cleavage of the C(2)-C(3) bond in oxaloacetate and in (2R)-alkyl malate derivatives to form oxalate and acetate, and alkyl carboxylates and R-ketocarboxylates, respectively. The polypeptide is Petal death protein (Dianthus caryophyllus (Carnation)).